Reading from the N-terminus, the 117-residue chain is Galanin peptides (117 aa).

A signal peptide spans 1–19 (MQRCAGFLFLSLILCAALS). The propeptide occupies 20-30 (ETFGLVLSAKE). At Thr-61 the chain carries Threonine amide.

Belongs to the galanin family.

It localises to the secreted. Functionally, endocrine hormone of the central and peripheral nervous systems that binds and activates the G protein-coupled receptors GALR1, GALR2, and GALR3. This small neuropeptide may regulate diverse physiologic functions including contraction of smooth muscle of the gastrointestinal and genitourinary tract, growth hormone and insulin release and adrenal secretion. This is Galanin peptides (GAL) from Coturnix japonica (Japanese quail).